The chain runs to 38 residues: Large ribosomal subunit protein bL36 (38 aa).

Belongs to the bacterial ribosomal protein bL36 family.

The sequence is that of Large ribosomal subunit protein bL36 from Wigglesworthia glossinidia brevipalpis.